Consider the following 205-residue polypeptide: uncharacterized protein (205 aa).

This is an uncharacterized protein from Picosynechococcus sp. (strain ATCC 27264 / PCC 7002 / PR-6) (Agmenellum quadruplicatum).